The primary structure comprises 126 residues: Holo-[acyl-carrier-protein] synthase (126 aa).

The Mg(2+) site is built by D9 and E58.

The protein belongs to the P-Pant transferase superfamily. AcpS family. The cofactor is Mg(2+).

The protein localises to the cytoplasm. It carries out the reaction apo-[ACP] + CoA = holo-[ACP] + adenosine 3',5'-bisphosphate + H(+). In terms of biological role, transfers the 4'-phosphopantetheine moiety from coenzyme A to a Ser of acyl-carrier-protein. The polypeptide is Holo-[acyl-carrier-protein] synthase (Pectobacterium atrosepticum (strain SCRI 1043 / ATCC BAA-672) (Erwinia carotovora subsp. atroseptica)).